Consider the following 79-residue polypeptide: uncharacterized protein (79 aa).

Residues Asn-22 to Asn-72 are compositionally biased toward low complexity. The disordered stretch occupies residues Asn-22–Gly-79.

This is an uncharacterized protein from Dictyostelium discoideum (Social amoeba).